The sequence spans 257 residues: Na(+)-translocating NADH-quinone reductase subunit C (257 aa).

A helical transmembrane segment spans residues 12-32; that stretch reads LFVVIALSLVCSIIVSAAAVG. Position 225 is an FMN phosphoryl threonine (T225).

Belongs to the NqrC family. Composed of six subunits; NqrA, NqrB, NqrC, NqrD, NqrE and NqrF. FMN serves as cofactor.

It localises to the cell inner membrane. The catalysed reaction is a ubiquinone + n Na(+)(in) + NADH + H(+) = a ubiquinol + n Na(+)(out) + NAD(+). Functionally, NQR complex catalyzes the reduction of ubiquinone-1 to ubiquinol by two successive reactions, coupled with the transport of Na(+) ions from the cytoplasm to the periplasm. NqrA to NqrE are probably involved in the second step, the conversion of ubisemiquinone to ubiquinol. This chain is Na(+)-translocating NADH-quinone reductase subunit C, found in Vibrio cholerae serotype O1 (strain ATCC 39541 / Classical Ogawa 395 / O395).